A 260-amino-acid polypeptide reads, in one-letter code: MNKVFNEFVYKISQDQIEKIEEYFFENNIKNYYFYETKEGTFLVLVFEEKQEKIFLPFNLEFVENRTTTSEDWVKNLITKPFEFIEGVYVDPDHNNVDGEIVIRITPGLAFGTGLHDTTKLSAKFLKKYLRPGMDVLDLGCGSAILSILAKKLGADRVLGVDNDPLAVEAAKENVERNNVDVEIRQSDLFSNVDGKFDLIVSNIIAEILIEALKDLPKFLKKDGVVILSGIIDSKLPLFKNYNIVEHWRSNEWNALVIKI.

S-adenosyl-L-methionine contacts are provided by threonine 119, glycine 140, aspartate 162, and asparagine 203.

It belongs to the methyltransferase superfamily. PrmA family.

It is found in the cytoplasm. It catalyses the reaction L-lysyl-[protein] + 3 S-adenosyl-L-methionine = N(6),N(6),N(6)-trimethyl-L-lysyl-[protein] + 3 S-adenosyl-L-homocysteine + 3 H(+). In terms of biological role, methylates ribosomal protein L11. This chain is Ribosomal protein L11 methyltransferase, found in Thermosipho africanus (strain TCF52B).